The chain runs to 843 residues: Major vault protein alpha (843 aa).

An N-acetylalanine modification is found at Ala2. MVP repeat units lie at residues 2 to 56 (ADLN…IPQR), 57 to 111 (NYCT…KVTA), 112 to 163 (LQVV…EEIK), 164 to 216 (ATII…EIVN), 217 to 272 (AYVL…GEVH), 273 to 324 (ITTL…IHNI), 325 to 376 (YVLT…KRES), 377 to 442 (IPLD…STRV), and 443 to 505 (VTYR…FLGP). The disordered stretch occupies residues 643–663 (QEAAARHEAERLEQGARGRLE). Residues 646–663 (AARHEAERLEQGARGRLE) show a composition bias toward basic and acidic residues.

The vault ribonucleoprotein particle is a huge (400 A x 670 A) cage structure of 12.9 MDa. It consists of a dimer of half-vaults, with each half-vault comprising 39 identical major vault protein (MVP) chains. Dictyostelium is one of the few organisms in which the major component is actually two proteins (alpha and beta).

The protein resides in the cytoplasm. It is found in the nucleus. Unknown, though MVP-alpha is required for normal vault structure. This Dictyostelium discoideum (Social amoeba) protein is Major vault protein alpha (mvpA).